A 174-amino-acid polypeptide reads, in one-letter code: Thiol-disulfide oxidoreductase ResA (174 aa).

Residues 11-30 (TVILLLLLAALGYTIYANFF) form a helical; Signal-anchor for type II membrane protein membrane-spanning segment. The 139-residue stretch at 36-174 (VAVGSTAPDF…IKQHLESIKP (139 aa)) folds into the Thioredoxin domain. Cys-74 and Cys-77 are disulfide-bonded.

The protein belongs to the thioredoxin family. ResA subfamily.

The protein localises to the cell membrane. Its pathway is protein modification; cytochrome c assembly. Thiol-disulfide oxidoreductase which is required in disulfide reduction during c-type cytochrome synthesis. May accept reducing equivalents from CcdA, leading to breakage of disulfide bonds in apocytochrome c; following this reduction heme can be covalently attached. This chain is Thiol-disulfide oxidoreductase ResA, found in Geobacillus thermodenitrificans (strain NG80-2).